The primary structure comprises 293 residues: Small ribosomal subunit biogenesis GTPase RsgA (293 aa).

Positions 63–223 (KNELVRPPIA…VADTPGFSSL (161 aa)) constitute a CP-type G domain. Residues 112-115 (SKMD) and 166-174 (GQSGVGKSS) contribute to the GTP site. Cysteine 247, cysteine 252, histidine 254, and cysteine 260 together coordinate Zn(2+).

The protein belongs to the TRAFAC class YlqF/YawG GTPase family. RsgA subfamily. As to quaternary structure, monomer. Associates with 30S ribosomal subunit, binds 16S rRNA. The cofactor is Zn(2+).

The protein resides in the cytoplasm. Its function is as follows. One of several proteins that assist in the late maturation steps of the functional core of the 30S ribosomal subunit. Helps release RbfA from mature subunits. May play a role in the assembly of ribosomal proteins into the subunit. Circularly permuted GTPase that catalyzes slow GTP hydrolysis, GTPase activity is stimulated by the 30S ribosomal subunit. This is Small ribosomal subunit biogenesis GTPase RsgA from Bacillus anthracis.